The sequence spans 339 residues: Phosphate acyltransferase (339 aa).

The protein belongs to the PlsX family. As to quaternary structure, homodimer. Probably interacts with PlsY.

It is found in the cytoplasm. The enzyme catalyses a fatty acyl-[ACP] + phosphate = an acyl phosphate + holo-[ACP]. Its pathway is lipid metabolism; phospholipid metabolism. Functionally, catalyzes the reversible formation of acyl-phosphate (acyl-PO(4)) from acyl-[acyl-carrier-protein] (acyl-ACP). This enzyme utilizes acyl-ACP as fatty acyl donor, but not acyl-CoA. The sequence is that of Phosphate acyltransferase from Vesicomyosocius okutanii subsp. Calyptogena okutanii (strain HA).